The chain runs to 642 residues: MMILQVNQLSKSFGADTILNNIKLEVRNRDRIAIVGRNGAGKSTLLKIIAGQLSYEKGEIIKPKDITMGYLAQHTGLDSKLTIKEELLTVFDHLKAMEKEMRAMEEKMAAADPGELESIMKTYDRLQQEFKDKGGYQYEADVRSVLHGLGFSHFDDSTQVQSLSGGQKTRLALGKLLLTQPDLLILDEPTNHLDIDTLTWLEHYLQGYSGAILIVSHDRYFLDKVVNQVYEVSRAESKKYHGNYSAYLDQKAAQYEKDLKMYEKQQDEIAKLQDFVDRNLARASTTKRAQSRRKQLERMDVMSKPLGDEKSANFHFDITKQSGNEVLRVQDLTISYENQPPLLTEVSFMLTRGESAALVGPNGIGKSTLLKTLIDTLKPDQGTISYGSNVSVGYYDQEQAELTSSKRVLDELWDEYPGLPEKEIRTCLGNFLFSGDDVLKPVHSLSGGEKARLALAKLMLQKANFLILDEPTNHLDLDSKEVLENALIDYPGTLLFVSHDRYFINRIATRVLELSSSHIEEYLGDYDYYTEKKTEQLELEKMNQQEETDKTPATVKSDSKRSYEEEKEWKKKERQRLRRIEEIETTVQTIEENISRNDELLCDPEVYQDHEKVQAIHADNEKLNQELESLLSEWEELSTEED.

ABC transporter domains lie at 4 to 259 and 327 to 541; these read LQVN…EKDL and LRVQ…ELEK. Residues 36 to 43 and 360 to 367 contribute to the ATP site; these read GRNGAGKS and GPNGIGKS. Basic and acidic residues-rich tracts occupy residues 541-550 and 557-567; these read KMNQQEETDK and SDSKRSYEEEK. The segment at 541–567 is disordered; that stretch reads KMNQQEETDKTPATVKSDSKRSYEEEK.

This sequence belongs to the ABC transporter superfamily. ABCF family. YdiF subfamily.

This Bacillus subtilis (strain 168) protein is Putative ATP-binding protein YdiF (ydiF).